The chain runs to 20 residues: Zinc metalloproteinase-disintegrin-like uracoina-1 (20 aa).

Belongs to the venom metalloproteinase (M12B) family. P-III subfamily. Monomer. It depends on Zn(2+) as a cofactor. Expressed by the venom gland.

It is found in the secreted. With respect to regulation, inhibited by ethylenediaminetetraacetic acid (EDTA) and 1,10-phenanthroline. Not inhibited by tosyl-L-lysine chloromethyl ketone (TCLK) and phenylmethanesulfonylfluoride (PMSF). Functionally, snake venom zinc metalloprotease that possesses hemorrhagic activity (minimum hemorrhagic dose, MHD=4.7 ug) when injected intradermally into mice. Degrades the alpha-chain of fibrinogen (FGA). This is Zinc metalloproteinase-disintegrin-like uracoina-1 from Crotalus vegrandis (Uracoan rattlesnake).